A 128-amino-acid chain; its full sequence is Cytochrome c-type biogenesis protein CcmE (128 aa).

Over 1–8 the chain is Cytoplasmic; that stretch reads MQKRVRNR. A helical; Signal-anchor for type II membrane protein transmembrane segment spans residues 9–29; the sequence is LITIIICFCSACLGISIILYN. At 30–128 the chain is on the periplasmic side; the sequence is LEKNIVFFLP…KHDENYRPPQ (99 aa). Histidine 120 and tyrosine 124 together coordinate heme.

It belongs to the CcmE/CycJ family.

Its subcellular location is the cell inner membrane. Functionally, heme chaperone required for the biogenesis of c-type cytochromes. Transiently binds heme delivered by CcmC and transfers the heme to apo-cytochromes in a process facilitated by CcmF and CcmH. In Rickettsia peacockii (strain Rustic), this protein is Cytochrome c-type biogenesis protein CcmE.